The chain runs to 208 residues: Large ribosomal subunit protein bL25 (208 aa).

Belongs to the bacterial ribosomal protein bL25 family. CTC subfamily. In terms of assembly, part of the 50S ribosomal subunit; part of the 5S rRNA/L5/L18/L25 subcomplex. Contacts the 5S rRNA. Binds to the 5S rRNA independently of L5 and L18.

Its function is as follows. This is one of the proteins that binds to the 5S RNA in the ribosome where it forms part of the central protuberance. This is Large ribosomal subunit protein bL25 from Burkholderia pseudomallei (strain K96243).